A 910-amino-acid polypeptide reads, in one-letter code: Protein kinase 3 (910 aa).

Positions 119 to 129 are enriched in gly residues; it reads SPSGGGGGGSG. Disordered stretches follow at residues 119–239, 270–295, and 391–454; these read SPSG…PNLI, FNNN…KTPT, and NKDD…NDKK. Composition is skewed to low complexity over residues 130-160, 169-196, 209-220, 227-239, 270-290, and 422-450; these read VSSN…QPTS, LSES…QSTS, GLSGSSTSSSSA, NNNA…PNLI, FNNN…TTST, and INQP…TSQT. Residues 498–763 enclose the Protein kinase domain; sequence FELLKVLGVG…FEEISSHPFF (266 aa). Residues 504 to 512 and K527 each bind ATP; that span reads LGVGSFGRV. The Proton acceptor role is filled by D621. At T664 the chain carries Phosphothreonine; by autocatalysis. The AGC-kinase C-terminal domain maps to 764 to 854; sequence ELIPWRMLES…NKEEEDGIMG (91 aa). Disordered stretches follow at residues 786–812 and 859–910; these read EISL…TLSC and IGSI…KGSV. 2 stretches are compositionally biased toward low complexity: residues 788–809 and 859–886; these read SLPN…NNLT and IGSI…SGGS.

This sequence belongs to the protein kinase superfamily. AGC Ser/Thr protein kinase family.

The catalysed reaction is L-seryl-[protein] + ATP = O-phospho-L-seryl-[protein] + ADP + H(+). It catalyses the reaction L-threonyl-[protein] + ATP = O-phospho-L-threonyl-[protein] + ADP + H(+). The sequence is that of Protein kinase 3 (pkgC) from Dictyostelium discoideum (Social amoeba).